The chain runs to 320 residues: Protoheme IX farnesyltransferase 1 (320 aa).

The next 9 helical transmembrane spans lie at 34–54, 58–78, 112–132, 135–155, 160–180, 189–209, 234–254, 255–275, and 299–319; these read GIIISNSIAAFGGFWIAFASA, LTGLAFLMTMVTAMLGTAFVM, AMILTYGSVLGIAGLAMLYSL, LTAFLGLAAFIFYAIIYTVWV, VWSTFVGSFPGAAPPLMGYCA, AVLLYTIMFLWQPPHFWAIGI, IKMMQYIAVLVPVTLLFPFSL, GTGHISPFYFLAALVLGGIWI, and LIYFCLLFFIMMIDSFMMFLI.

Belongs to the UbiA prenyltransferase family. Protoheme IX farnesyltransferase subfamily. As to quaternary structure, interacts with CtaA.

Its subcellular location is the cell membrane. It carries out the reaction heme b + (2E,6E)-farnesyl diphosphate + H2O = Fe(II)-heme o + diphosphate. The protein operates within porphyrin-containing compound metabolism; heme O biosynthesis; heme O from protoheme: step 1/1. Its function is as follows. Converts heme B (protoheme IX) to heme O by substitution of the vinyl group on carbon 2 of heme B porphyrin ring with a hydroxyethyl farnesyl side group. This chain is Protoheme IX farnesyltransferase 1 (ctaB1), found in Bacillus subtilis (strain 168).